A 53-amino-acid chain; its full sequence is Large ribosomal subunit protein bL32 (53 aa).

The span at 1-20 (MAVPKRRVSHTRAAKRRTHY) shows a compositional bias: basic residues. The interval 1–53 (MAVPKRRVSHTRAAKRRTHYKLTLPMPVKDADGTWRMPHHMNMTTGEYKTTKA) is disordered. Over residues 42–53 (NMTTGEYKTTKA) the composition is skewed to polar residues.

The protein belongs to the bacterial ribosomal protein bL32 family.

The sequence is that of Large ribosomal subunit protein bL32 from Sulfurovum sp. (strain NBC37-1).